Reading from the N-terminus, the 277-residue chain is NADPH-dependent 7-cyano-7-deazaguanine reductase (277 aa).

83–85 (IES) is a binding site for substrate. An NADPH-binding site is contributed by 85 to 86 (SK). The Thioimide intermediate role is filled by cysteine 184. The active-site Proton donor is the aspartate 191. 223–224 (HE) contacts substrate. 252–253 (RG) serves as a coordination point for NADPH.

The protein belongs to the GTP cyclohydrolase I family. QueF type 2 subfamily. As to quaternary structure, homodimer.

The protein localises to the cytoplasm. It carries out the reaction 7-aminomethyl-7-carbaguanine + 2 NADP(+) = 7-cyano-7-deazaguanine + 2 NADPH + 3 H(+). It participates in tRNA modification; tRNA-queuosine biosynthesis. Its function is as follows. Catalyzes the NADPH-dependent reduction of 7-cyano-7-deazaguanine (preQ0) to 7-aminomethyl-7-deazaguanine (preQ1). The protein is NADPH-dependent 7-cyano-7-deazaguanine reductase of Cupriavidus pinatubonensis (strain JMP 134 / LMG 1197) (Cupriavidus necator (strain JMP 134)).